Here is an 821-residue protein sequence, read N- to C-terminus: uncharacterized protein (821 aa).

Disordered regions lie at residues 1-20 (MGQT…TTSS), 55-96 (SENY…EAYS), 134-205 (SYDF…NNEH), 240-263 (RLHQ…RSSW), 274-293 (PEEF…TPLN), 360-381 (NVLQ…ESNS), 430-450 (TSED…NESR), 467-497 (EFST…SQAF), 512-535 (RNLF…NQPT), and 549-641 (AQEP…SNQT). Composition is skewed to polar residues over residues 58 to 88 (YADT…CSTQ) and 185 to 203 (SLPS…SINN). Polar residues predominate over residues 279 to 293 (NASNPEAHSNFTPLN). Residues 437 to 450 (TMTQENQSLHNESR) are compositionally biased toward polar residues. Composition is skewed to low complexity over residues 517 to 529 (TSNS…SSFS) and 568 to 578 (SSLLDSSNSNS). Polar residues predominate over residues 579-622 (QRPFSTVPSESNVFSRNASGNFSMSQTHQPTTDNTSSFSTQPGR). The segment at 766–809 (CLICLETYTNGDICRKLQACKHFFHQACIDQWLTTGNNSCPLCR) adopts an RING-type; atypical zinc-finger fold.

This is an uncharacterized protein from Schizosaccharomyces pombe (strain 972 / ATCC 24843) (Fission yeast).